A 120-amino-acid polypeptide reads, in one-letter code: Large ribosomal subunit protein uL18 (120 aa).

This sequence belongs to the universal ribosomal protein uL18 family. In terms of assembly, part of the 50S ribosomal subunit; part of the 5S rRNA/L5/L18/L25 subcomplex. Contacts the 5S and 23S rRNAs.

Functionally, this is one of the proteins that bind and probably mediate the attachment of the 5S RNA into the large ribosomal subunit, where it forms part of the central protuberance. The protein is Large ribosomal subunit protein uL18 of Rhizobium rhizogenes (strain K84 / ATCC BAA-868) (Agrobacterium radiobacter).